The chain runs to 264 residues: ATP synthase subunit a (264 aa).

A run of 7 helical transmembrane segments spans residues 29-49, 90-110, 111-131, 134-154, 177-197, 208-228, and 235-255; these read TWHI…LWIF, IAPL…MDMI, PVDW…KVVP, DVNI…YYSI, IPVN…SLAL, LIFI…TLGV, and LIFH…LTIV.

It belongs to the ATPase A chain family. In terms of assembly, F-type ATPases have 2 components, CF(1) - the catalytic core - and CF(0) - the membrane proton channel. CF(1) has five subunits: alpha(3), beta(3), gamma(1), delta(1), epsilon(1). CF(0) has three main subunits: a(1), b(2) and c(9-12). The alpha and beta chains form an alternating ring which encloses part of the gamma chain. CF(1) is attached to CF(0) by a central stalk formed by the gamma and epsilon chains, while a peripheral stalk is formed by the delta and b chains.

Its subcellular location is the cell inner membrane. Its function is as follows. Key component of the proton channel; it plays a direct role in the translocation of protons across the membrane. This Shewanella denitrificans (strain OS217 / ATCC BAA-1090 / DSM 15013) protein is ATP synthase subunit a.